Here is a 305-residue protein sequence, read N- to C-terminus: Ribonuclease BN (305 aa).

Zn(2+) is bound by residues His64, His66, Asp68, His69, His141, Asp212, and His270. The active-site Proton acceptor is the Asp68.

The protein belongs to the RNase Z family. RNase BN subfamily. Homodimer. The cofactor is Zn(2+).

Zinc phosphodiesterase, which has both exoribonuclease and endoribonuclease activities. This chain is Ribonuclease BN, found in Salmonella gallinarum (strain 287/91 / NCTC 13346).